The following is a 389-amino-acid chain: Succinate--CoA ligase [ADP-forming] subunit beta (389 aa).

Positions 9-244 constitute an ATP-grasp domain; that stretch reads KEIFRSMGVA…LDEEDPKEIE (236 aa). ATP contacts are provided by residues lysine 46, 53–55, glutamate 99, cysteine 102, and glutamate 107; that span reads GRG. Asparagine 199 and aspartate 213 together coordinate Mg(2+). Substrate is bound by residues asparagine 264 and 321–323; that span reads GIM.

This sequence belongs to the succinate/malate CoA ligase beta subunit family. In terms of assembly, heterotetramer of two alpha and two beta subunits. Mg(2+) serves as cofactor.

The enzyme catalyses succinate + ATP + CoA = succinyl-CoA + ADP + phosphate. It catalyses the reaction GTP + succinate + CoA = succinyl-CoA + GDP + phosphate. The protein operates within carbohydrate metabolism; tricarboxylic acid cycle; succinate from succinyl-CoA (ligase route): step 1/1. Succinyl-CoA synthetase functions in the citric acid cycle (TCA), coupling the hydrolysis of succinyl-CoA to the synthesis of either ATP or GTP and thus represents the only step of substrate-level phosphorylation in the TCA. The beta subunit provides nucleotide specificity of the enzyme and binds the substrate succinate, while the binding sites for coenzyme A and phosphate are found in the alpha subunit. The chain is Succinate--CoA ligase [ADP-forming] subunit beta from Macrococcus caseolyticus (strain JCSC5402) (Macrococcoides caseolyticum).